A 249-amino-acid chain; its full sequence is Carbohydrate deacetylase (249 aa).

Mg(2+)-binding residues include His-60 and His-125.

The protein belongs to the YdjC deacetylase family. In terms of assembly, homodimer. The cofactor is Mg(2+).

In terms of biological role, probably catalyzes the deacetylation of acetylated carbohydrates an important step in the degradation of oligosaccharides. The polypeptide is Carbohydrate deacetylase (Thermoanaerobacter pseudethanolicus (strain ATCC 33223 / 39E) (Clostridium thermohydrosulfuricum)).